The chain runs to 372 residues: Putative actin-27 (372 aa).

It belongs to the actin family.

The protein resides in the cytoplasm. It localises to the cytoskeleton. It carries out the reaction ATP + H2O = ADP + phosphate + H(+). In terms of biological role, actins are highly conserved proteins that are involved in various types of cell motility and are ubiquitously expressed in all eukaryotic cells. Multiple isoforms are involved in various cellular functions such as cytoskeleton structure, cell mobility, chromosome movement and muscle contraction. The chain is Putative actin-27 (act27) from Dictyostelium discoideum (Social amoeba).